The chain runs to 151 residues: Late embryogenesis abundant protein Lea14-A (151 aa).

It belongs to the LEA type 2 family.

In Gossypium hirsutum (Upland cotton), this protein is Late embryogenesis abundant protein Lea14-A (LEA14-A).